A 460-amino-acid chain; its full sequence is Argininosuccinate lyase (460 aa).

Belongs to the lyase 1 family. Argininosuccinate lyase subfamily.

The protein resides in the cytoplasm. The catalysed reaction is 2-(N(omega)-L-arginino)succinate = fumarate + L-arginine. It participates in amino-acid biosynthesis; L-arginine biosynthesis; L-arginine from L-ornithine and carbamoyl phosphate: step 3/3. This is Argininosuccinate lyase from Pelotomaculum thermopropionicum (strain DSM 13744 / JCM 10971 / SI).